Here is a 94-residue protein sequence, read N- to C-terminus: Integration host factor subunit beta (94 aa).

This sequence belongs to the bacterial histone-like protein family. As to quaternary structure, heterodimer of an alpha and a beta chain.

In terms of biological role, this protein is one of the two subunits of integration host factor, a specific DNA-binding protein that functions in genetic recombination as well as in transcriptional and translational control. This chain is Integration host factor subunit beta, found in Actinobacillus succinogenes (strain ATCC 55618 / DSM 22257 / CCUG 43843 / 130Z).